Reading from the N-terminus, the 317-residue chain is UV DNA damage endonuclease (317 aa).

Belongs to the uve1/UvsE family.

Functionally, component in a DNA repair pathway. Removal of UV LIGHT damaged nucleotides. Recognizes pyrimidine dimers and cleave a phosphodiester bond immediately 5' to the lesion. The protein is UV DNA damage endonuclease of Bacillus anthracis (strain A0248).